The following is a 350-amino-acid chain: Autophagy-related protein 3 (350 aa).

The tract at residues 85-166 (NFAGDAGLEE…EEDDEAIIRD (82 aa)) is flexible region. The disordered stretch occupies residues 97 to 171 (VDDGDEFKGS…AIIRDTDASG (75 aa)). A compositionally biased stretch (basic and acidic residues) spans 102 to 113 (EFKGSKGDDDGW). The segment covering 146 to 161 (DDDDDIPDMEDEEDDE) has biased composition (acidic residues). C244 functions as the Glycyl thioester intermediate in the catalytic mechanism. The handle region stretch occupies residues 248 to 326 (PVMKTLLDRA…DQEVAIRVDQ (79 aa)). K262 and K267 each carry N6-acetyllysine.

This sequence belongs to the ATG3 family. In terms of assembly, monomer. Interacts with ATG8 through an intermediate thioester bond through the C-terminal Gly of ATG8. Also interacts with the 40 amino acid C-terminal region of the E1-like ATG7 enzyme. Also interacts with the ATG12-ATG5 conjugate. Interacts with HAT1. Post-translationally, acetylated by HAT1 at Lys-262 and Lys-267, which affects the interaction with ATG8 and prevents autophagy during both appressorium development and nutrient starvation.

It localises to the preautophagosomal structure. It is found in the cytoplasm. Its function is as follows. E2 conjugating enzyme required for the cytoplasm to vacuole transport (Cvt) and autophagy. Required for selective autophagic degradation of the nucleus (nucleophagy) as well as for mitophagy which contributes to regulate mitochondrial quantity and quality by eliminating the mitochondria to a basal level to fulfill cellular energy requirements and preventing excess ROS production. Responsible for the E2-like covalent binding of phosphatidylethanolamine to the C-terminal Gly of ATG8. The ATG12-ATG5 conjugate plays a role of an E3 and promotes the transfer of ATG8 from ATG3 to phosphatidylethanolamine (PE). This step is required for the membrane association of ATG8. The formation of the ATG8-phosphatidylethanolamine conjugate is essential for autophagy and for the cytoplasm to vacuole transport (Cvt). The ATG8-PE conjugate mediates tethering between adjacent membranes and stimulates membrane hemifusion, leading to expansion of the autophagosomal membrane during autophagy. Plays a role in appressorium formation and pathogenicity. This chain is Autophagy-related protein 3, found in Pyricularia oryzae (strain 70-15 / ATCC MYA-4617 / FGSC 8958) (Rice blast fungus).